The chain runs to 157 residues: Phosphopantetheine adenylyltransferase (157 aa).

Ser9 is a substrate binding site. ATP-binding positions include 9–10 and His17; that span reads SF. The substrate site is built by Lys41, Leu74, and Lys88. ATP is bound by residues 89 to 91, Glu99, and 123 to 129; these read GLR and YTHVSSS.

The protein belongs to the bacterial CoaD family. Homohexamer. Requires Mg(2+) as cofactor.

The protein resides in the cytoplasm. It carries out the reaction (R)-4'-phosphopantetheine + ATP + H(+) = 3'-dephospho-CoA + diphosphate. It functions in the pathway cofactor biosynthesis; coenzyme A biosynthesis; CoA from (R)-pantothenate: step 4/5. Reversibly transfers an adenylyl group from ATP to 4'-phosphopantetheine, yielding dephospho-CoA (dPCoA) and pyrophosphate. The protein is Phosphopantetheine adenylyltransferase of Micrococcus luteus (strain ATCC 4698 / DSM 20030 / JCM 1464 / CCM 169 / CCUG 5858 / IAM 1056 / NBRC 3333 / NCIMB 9278 / NCTC 2665 / VKM Ac-2230) (Micrococcus lysodeikticus).